The primary structure comprises 55 residues: Large ribosomal subunit protein bL32c (55 aa).

The protein belongs to the bacterial ribosomal protein bL32 family.

It localises to the plastid. It is found in the chloroplast. The chain is Large ribosomal subunit protein bL32c from Daucus carota (Wild carrot).